Consider the following 217-residue polypeptide: uncharacterized protein (217 aa).

The segment covering 59 to 76 (AQSTIQRTSSLPVPSSSN) has biased composition (polar residues). 2 disordered regions span residues 59-105 (AQST…ETAN) and 124-217 (KKSL…HISK). Residue serine 68 is modified to Phosphoserine. Residue threonine 92 is modified to Phosphothreonine. The segment covering 124–135 (KKSLERRVREEQ) has biased composition (basic and acidic residues). The segment covering 136 to 147 (EEKTDNEDDNDV) has biased composition (acidic residues). Over residues 148-157 (EISTQESLEN) the composition is skewed to polar residues. Residues 173 to 188 (LEDDIEGQEFSFDDQD) are compositionally biased toward acidic residues. Residues 199 to 217 (WLSSQKQQGSPLTSDHISK) are compositionally biased toward polar residues.

This is an uncharacterized protein from Schizosaccharomyces pombe (strain 972 / ATCC 24843) (Fission yeast).